The sequence spans 306 residues: MKDKHIAVLMGGFSSERSISLSSGAACADVLEEQGYRVSRVDVGAHIASVLEQLQPDIAFNALHGPFGEDGRIQGILEYLKIPYTHSGVMASALAMDKGRAKIIAANAGVCVAPSRIMNRFSIGKTHPMEPPYVIKPVCEGSSFGVVIVQENEAVPPHNIGGSEWGYADEVMVEKYIPGRELTCAVLGNEVLDVCEILPDQHFAFYDYDSKYKTGGSLHICPAKLSLNIYQSVQRMSLAAHQAIGCRGVSRSDFRFDEKTGELVWLEINTQPGMTSTSLLPDIAKASGRTYGDIVQWMVEDASCMR.

The ATP-grasp domain maps to 102 to 300; it reads KIIAANAGVC…YGDIVQWMVE (199 aa). Position 128 to 183 (128 to 183) interacts with ATP; that stretch reads PMEPPYVIKPVCEGSSFGVVIVQENEAVPPHNIGGSEWGYADEVMVEKYIPGRELT. Asp253, Glu267, and Asn269 together coordinate Mg(2+).

Belongs to the D-alanine--D-alanine ligase family. Mg(2+) is required as a cofactor. It depends on Mn(2+) as a cofactor.

It is found in the cytoplasm. The catalysed reaction is 2 D-alanine + ATP = D-alanyl-D-alanine + ADP + phosphate + H(+). It functions in the pathway cell wall biogenesis; peptidoglycan biosynthesis. Cell wall formation. The sequence is that of D-alanine--D-alanine ligase from Bartonella tribocorum (strain CIP 105476 / IBS 506).